The sequence spans 199 residues: Protein GrpE (199 aa).

A disordered region spans residues 20 to 52 (YKVENEILEEETDEESQHQEPALGHPSYTALEE).

Belongs to the GrpE family. As to quaternary structure, homodimer.

Its subcellular location is the cytoplasm. Functionally, participates actively in the response to hyperosmotic and heat shock by preventing the aggregation of stress-denatured proteins, in association with DnaK and GrpE. It is the nucleotide exchange factor for DnaK and may function as a thermosensor. Unfolded proteins bind initially to DnaJ; upon interaction with the DnaJ-bound protein, DnaK hydrolyzes its bound ATP, resulting in the formation of a stable complex. GrpE releases ADP from DnaK; ATP binding to DnaK triggers the release of the substrate protein, thus completing the reaction cycle. Several rounds of ATP-dependent interactions between DnaJ, DnaK and GrpE are required for fully efficient folding. The chain is Protein GrpE from Legionella pneumophila (strain Corby).